The chain runs to 336 residues: C2H2 finger domain transcription factor mtfA (336 aa).

Residues 1-245 (MDVASLISPS…PSPGHQQMIS (245 aa)) are disordered. 2 stretches are compositionally biased toward polar residues: residues 7-29 (ISPS…SSAS) and 36-56 (EQST…YSRT). Residues 136-149 (SPSTSSVSAASSSA) show a composition bias toward low complexity. Polar residues predominate over residues 168 to 181 (TDRSSISSQGSVQH). Positions 182–210 (AASAPYASPAPSVSSFSSPIEPSTPSTAA) are enriched in low complexity. Residues 216–245 (PAPNTFQNPSPFPQTSTASLPSPGHQQMIS) show a composition bias toward polar residues. 2 consecutive C2H2-type zinc fingers follow at residues 272–294 (YICR…SHSH) and 300–325 (FRCT…RGCH).

The protein resides in the nucleus. Transcription factor that controls morphogenesis and virulence. Acts as a positive regulator of gliotixin and protease production. The chain is C2H2 finger domain transcription factor mtfA from Aspergillus fumigatus (strain CBS 144.89 / FGSC A1163 / CEA10) (Neosartorya fumigata).